Consider the following 792-residue polypeptide: Ribonucleoside-diphosphate reductase large subunit (792 aa).

Positions 1-92 (MHVIKRDGRQ…VSNLHKETKK (92 aa)) constitute an ATP-cone domain. ATP contacts are provided by residues 5–6 (KR), 11–17 (ERVMFDK), Thr53, and Asp57. The residue at position 17 (Lys17) is an N6-acetyllysine. GDP-binding residues include Ser202 and Ser217. Cysteines 218 and 444 form a disulfide. DTTP contacts are provided by residues 226 to 228 (DSI), Lys243, Arg256, and 263 to 264 (AG). Lys376 bears the N6-acetyllysine mark. Asn427 contributes to the GDP binding site. Catalysis depends on Asn427, which acts as the Proton acceptor. Cys429 serves as the catalytic Cysteine radical intermediate. GDP-binding positions include Glu431 and 604 to 607 (TAST). Glu431 acts as the Proton acceptor in catalysis. Thr751 bears the Phosphothreonine mark.

Belongs to the ribonucleoside diphosphate reductase large chain family. In terms of assembly, heterodimer of a large and a small subunit. Interacts with RRM2B. Interacts with AHCYL1 which inhibits its activity.

Its subcellular location is the cytoplasm. The catalysed reaction is a 2'-deoxyribonucleoside 5'-diphosphate + [thioredoxin]-disulfide + H2O = a ribonucleoside 5'-diphosphate + [thioredoxin]-dithiol. Under complex allosteric control mediated by deoxynucleoside triphosphates and ATP binding to separate specificity and activation sites on the M1 subunit. The type of nucleotide bound at the specificity site determines substrate preference. It seems probable that ATP makes the enzyme reduce CDP and UDP, dGTP favors ADP reduction and dTTP favors GDP reduction. Stimulated by ATP and inhibited by dATP binding to the activity site, the dATP inhibition is mediated by AHCYL1 which stabilizes dATP in the site. In terms of biological role, provides the precursors necessary for DNA synthesis. Catalyzes the biosynthesis of deoxyribonucleotides from the corresponding ribonucleotides. In Mus musculus (Mouse), this protein is Ribonucleoside-diphosphate reductase large subunit (Rrm1).